The sequence spans 122 residues: Small ribosomal subunit protein uS13 (122 aa).

Residues 97-122 (PVRGQRTHTNARTRKGPAKAIAGKKK) are disordered.

This sequence belongs to the universal ribosomal protein uS13 family. As to quaternary structure, part of the 30S ribosomal subunit. Forms a loose heterodimer with protein S19. Forms two bridges to the 50S subunit in the 70S ribosome.

Functionally, located at the top of the head of the 30S subunit, it contacts several helices of the 16S rRNA. In the 70S ribosome it contacts the 23S rRNA (bridge B1a) and protein L5 of the 50S subunit (bridge B1b), connecting the 2 subunits; these bridges are implicated in subunit movement. Contacts the tRNAs in the A and P-sites. This Bartonella henselae (strain ATCC 49882 / DSM 28221 / CCUG 30454 / Houston 1) (Rochalimaea henselae) protein is Small ribosomal subunit protein uS13.